A 179-amino-acid polypeptide reads, in one-letter code: MSALKEYYTNECVPALKDQLGYTNPMQIPKIEKIVLNMGLGEAVQNPKIVEGAAEELTKIAGQRAVVTKAKKSIATFKLREGMPIGCRVTLRGEKMYDFLSKLVNIALPRVRDFRGVSPKGFDGRGNYSMGIQEQIIFPEIDYDKIDKIKGFNITIVTSAKTNDEGRSLLRLMGMPFKK.

This sequence belongs to the universal ribosomal protein uL5 family. As to quaternary structure, part of the 50S ribosomal subunit; part of the 5S rRNA/L5/L18/L25 subcomplex. Contacts the 5S rRNA and the P site tRNA. Forms a bridge to the 30S subunit in the 70S ribosome.

Its function is as follows. This is one of the proteins that bind and probably mediate the attachment of the 5S RNA into the large ribosomal subunit, where it forms part of the central protuberance. In the 70S ribosome it contacts protein S13 of the 30S subunit (bridge B1b), connecting the 2 subunits; this bridge is implicated in subunit movement. Contacts the P site tRNA; the 5S rRNA and some of its associated proteins might help stabilize positioning of ribosome-bound tRNAs. This is Large ribosomal subunit protein uL5 from Desulfotalea psychrophila (strain LSv54 / DSM 12343).